Here is a 357-residue protein sequence, read N- to C-terminus: Protein RecA (357 aa).

73–80 (GPESSGKT) contacts ATP.

This sequence belongs to the RecA family.

It localises to the cytoplasm. In terms of biological role, can catalyze the hydrolysis of ATP in the presence of single-stranded DNA, the ATP-dependent uptake of single-stranded DNA by duplex DNA, and the ATP-dependent hybridization of homologous single-stranded DNAs. It interacts with LexA causing its activation and leading to its autocatalytic cleavage. This is Protein RecA from Nitratidesulfovibrio vulgaris (strain ATCC 29579 / DSM 644 / CCUG 34227 / NCIMB 8303 / VKM B-1760 / Hildenborough) (Desulfovibrio vulgaris).